Reading from the N-terminus, the 81-residue chain is Sulfur carrier protein TusA (81 aa).

Cys19 serves as the catalytic Cysteine persulfide intermediate.

It belongs to the sulfur carrier protein TusA family. As to quaternary structure, interacts with IscS.

The protein localises to the cytoplasm. It participates in tRNA modification. Sulfur carrier protein involved in sulfur trafficking in the cell. Part of a sulfur-relay system required for 2-thiolation during synthesis of 2-thiouridine of the modified wobble base 5-methylaminomethyl-2-thiouridine (mnm(5)s(2)U) in tRNA. Interacts with IscS and stimulates its cysteine desulfurase activity. Accepts an activated sulfur from IscS, which is then transferred to TusD, and thus determines the direction of sulfur flow from IscS to 2-thiouridine formation. Also appears to be involved in sulfur transfer for the biosynthesis of molybdopterin. This chain is Sulfur carrier protein TusA, found in Erwinia tasmaniensis (strain DSM 17950 / CFBP 7177 / CIP 109463 / NCPPB 4357 / Et1/99).